Here is a 258-residue protein sequence, read N- to C-terminus: Ubiquinone/menaquinone biosynthesis C-methyltransferase UbiE (258 aa).

Positions 1-20 (MSESRTSADGGMETSYGFRE) are disordered. S-adenosyl-L-methionine is bound by residues threonine 81, aspartate 102, and 130-131 (NA).

This sequence belongs to the class I-like SAM-binding methyltransferase superfamily. MenG/UbiE family.

The catalysed reaction is a 2-demethylmenaquinol + S-adenosyl-L-methionine = a menaquinol + S-adenosyl-L-homocysteine + H(+). It catalyses the reaction a 2-methoxy-6-(all-trans-polyprenyl)benzene-1,4-diol + S-adenosyl-L-methionine = a 5-methoxy-2-methyl-3-(all-trans-polyprenyl)benzene-1,4-diol + S-adenosyl-L-homocysteine + H(+). It functions in the pathway quinol/quinone metabolism; menaquinone biosynthesis; menaquinol from 1,4-dihydroxy-2-naphthoate: step 2/2. The protein operates within cofactor biosynthesis; ubiquinone biosynthesis. Its function is as follows. Methyltransferase required for the conversion of demethylmenaquinol (DMKH2) to menaquinol (MKH2) and the conversion of 2-polyprenyl-6-methoxy-1,4-benzoquinol (DDMQH2) to 2-polyprenyl-3-methyl-6-methoxy-1,4-benzoquinol (DMQH2). The polypeptide is Ubiquinone/menaquinone biosynthesis C-methyltransferase UbiE (Rhizobium etli (strain ATCC 51251 / DSM 11541 / JCM 21823 / NBRC 15573 / CFN 42)).